The following is a 199-amino-acid chain: Recombination protein RecR (199 aa).

The C4-type zinc-finger motif lies at 58 to 73; that stretch reads CRTCFSLSDQPECRIC. One can recognise a Toprim domain in the interval 81–176; that stretch reads SIICVVEKPT…NVTRIASGVP (96 aa).

It belongs to the RecR family.

May play a role in DNA repair. It seems to be involved in an RecBC-independent recombinational process of DNA repair. It may act with RecF and RecO. The polypeptide is Recombination protein RecR (Desulforapulum autotrophicum (strain ATCC 43914 / DSM 3382 / VKM B-1955 / HRM2) (Desulfobacterium autotrophicum)).